The following is a 305-amino-acid chain: UDP-3-O-acyl-N-acetylglucosamine deacetylase (305 aa).

Zn(2+) contacts are provided by H79, H238, and D242. H265 acts as the Proton donor in catalysis.

Belongs to the LpxC family. Requires Zn(2+) as cofactor.

It carries out the reaction a UDP-3-O-[(3R)-3-hydroxyacyl]-N-acetyl-alpha-D-glucosamine + H2O = a UDP-3-O-[(3R)-3-hydroxyacyl]-alpha-D-glucosamine + acetate. Its pathway is glycolipid biosynthesis; lipid IV(A) biosynthesis; lipid IV(A) from (3R)-3-hydroxytetradecanoyl-[acyl-carrier-protein] and UDP-N-acetyl-alpha-D-glucosamine: step 2/6. Its function is as follows. Catalyzes the hydrolysis of UDP-3-O-myristoyl-N-acetylglucosamine to form UDP-3-O-myristoylglucosamine and acetate, the committed step in lipid A biosynthesis. The protein is UDP-3-O-acyl-N-acetylglucosamine deacetylase of Klebsiella pneumoniae (strain 342).